Here is a 388-residue protein sequence, read N- to C-terminus: Chorismate synthase (388 aa).

NADP(+) contacts are provided by arginine 39 and arginine 45. FMN contacts are provided by residues 132–134 (RSS), 251–252 (NA), glycine 296, 311–315 (KPIPT), and arginine 337.

Belongs to the chorismate synthase family. In terms of assembly, homotetramer. FMNH2 serves as cofactor.

It catalyses the reaction 5-O-(1-carboxyvinyl)-3-phosphoshikimate = chorismate + phosphate. Its pathway is metabolic intermediate biosynthesis; chorismate biosynthesis; chorismate from D-erythrose 4-phosphate and phosphoenolpyruvate: step 7/7. In terms of biological role, catalyzes the anti-1,4-elimination of the C-3 phosphate and the C-6 proR hydrogen from 5-enolpyruvylshikimate-3-phosphate (EPSP) to yield chorismate, which is the branch point compound that serves as the starting substrate for the three terminal pathways of aromatic amino acid biosynthesis. This reaction introduces a second double bond into the aromatic ring system. The chain is Chorismate synthase from Staphylococcus carnosus (strain TM300).